The sequence spans 121 residues: Small basic protein (121 aa).

The next 3 membrane-spanning stretches (helical) occupy residues 2 to 22, 29 to 49, and 57 to 77; these read WLPV…NLTI, YLSL…RAHL, and VFVS…FLGV.

The protein belongs to the sbp family.

The protein resides in the cell membrane. This is Small basic protein (sbp) from Bacillus subtilis (strain 168).